A 553-amino-acid chain; its full sequence is Formate--tetrahydrofolate ligase (553 aa).

Residue 62–69 (TPAGEGKS) coordinates ATP.

The protein belongs to the formate--tetrahydrofolate ligase family.

It catalyses the reaction (6S)-5,6,7,8-tetrahydrofolate + formate + ATP = (6R)-10-formyltetrahydrofolate + ADP + phosphate. Its pathway is one-carbon metabolism; tetrahydrofolate interconversion. The chain is Formate--tetrahydrofolate ligase from Pediococcus pentosaceus (strain ATCC 25745 / CCUG 21536 / LMG 10740 / 183-1w).